The chain runs to 535 residues: EH domain-containing protein 3 (535 aa).

Position 1 is an N-acetylmethionine (Met-1). In terms of domain architecture, Dynamin-type G spans 55–286 (FDNKPMVLLV…DLFRDIQSLP (232 aa)). Positions 65–72 (GQYSTGKT) are G1 motif. Position 65–72 (65–72 (GQYSTGKT)) interacts with ATP. The G2 motif stretch occupies residues 91–92 (EP). The tract at residues 153 to 156 (DTPG) is G3 motif. Residues 198–227 (DEFSEVIKALKNHEDKMRVVLNKADQIETQ) are a coiled coil. The tract at residues 219-222 (NKAD) is G4 motif. Lys-220 provides a ligand contact to ATP. A region of interest (G5 motif) is located at residue Ile-243. Trp-258 serves as a coordination point for ATP. Lys-315 is covalently cross-linked (Glycyl lysine isopeptide (Lys-Gly) (interchain with G-Cter in SUMO)). Ser-349 and Ser-456 each carry phosphoserine. Residues 444 to 532 (DKPMYDEIFY…AHLLPPSKRK (89 aa)) form the EH domain. An EF-hand domain is found at 476 to 511 (LPNSVLGKIWKLADIDKDGMLDDDEFALANHLIKVK). Residues Asp-489, Asp-491, Asp-493, Met-495, and Glu-500 each contribute to the Ca(2+) site. Lys-511 is covalently cross-linked (Glycyl lysine isopeptide (Lys-Gly) (interchain with G-Cter in SUMO)).

This sequence belongs to the TRAFAC class dynamin-like GTPase superfamily. Dynamin/Fzo/YdjA family. EHD subfamily. Homooligomer, and heterooligomer with EHD1, EHD2 and EHD4, ATP-binding is required for heterooligomerization. Interacts with PACSIN1. Interacts with PACSIN2. Interacts (via EH domain) with MICALL1. Interacts (via EH domain) with RAB11FIP2. Interacts with ANK2. Highly expressed in heart and brain and moderately expressed in kidney, liver, and placenta.

The protein resides in the recycling endosome membrane. The protein localises to the cell membrane. It localises to the cell projection. Its subcellular location is the cilium membrane. ATP- and membrane-binding protein that controls membrane reorganization/tubulation upon ATP hydrolysis. In vitro causes tubulation of endocytic membranes. Binding to phosphatidic acid induces its membrane tubulation activity. Plays a role in endocytic transport. Involved in early endosome to recycling endosome compartment (ERC), retrograde early endosome to Golgi, and endosome to plasma membrane (rapid recycling) protein transport. Involved in the regulation of Golgi maintenance and morphology. Involved in the recycling of internalized D1 dopamine receptor. Plays a role in cardiac protein trafficking probably implicating ANK2. Involved in the ventricular membrane targeting of SLC8A1 and CACNA1C and probably the atrial membrane localization of CACNA1GG and CACNA1H implicated in the regulation of atrial myocyte excitability and cardiac conduction. In conjunction with EHD4 may be involved in endocytic trafficking of KDR/VEGFR2 implicated in control of glomerular function. Involved in the rapid recycling of integrin beta-3 implicated in cell adhesion maintenance. Involved in the unidirectional retrograde dendritic transport of endocytosed BACE1 and in efficient sorting of BACE1 to axons implicating a function in neuronal APP processing. Plays a role in the formation of the ciliary vesicle, an early step in cilium biogenesis; possibly sharing redundant functions with EHD1. The chain is EH domain-containing protein 3 from Homo sapiens (Human).